Consider the following 906-residue polypeptide: Peroxisomal hydratase-dehydrogenase-epimerase (906 aa).

Short-chain dehydrogenase like stretches follow at residues 5 to 228 and 319 to 532; these read DFKD…SSAE and SLKD…GTDD. 4 residues coordinate NADP(+): Ile13, Lys52, Asn98, and Lys131. Residues Ser149 and Tyr163 each act as proton donor in the active site. Residues Tyr163 and Lys167 each coordinate NADP(+). The active-site Proton acceptor is Tyr163. Lys167 acts as the Lowers pKa of active site Tyr in catalysis. Tyr467 serves as the catalytic Proton acceptor. The disordered stretch occupies residues 600–633; sequence AVGGDDDDDDEDEEEDEGDEEEDEEDEEEDDPVW. Residues 603–630 show a composition bias toward acidic residues; the sequence is GDDDDDDEDEEEDEGDEEEDEEDEEEDD. His699, Gly700, Lys729, Tyr757, Asp808, Asn810, Gly831, Phe856, Thr857, and Gly858 together coordinate (3R)-3-hydroxydecanoyl-CoA. The MaoC-like domain occupies 782–893; the sequence is APKRAPDYQV…VVDRGTIAIN (112 aa). Positions 904-906 match the Microbody targeting signal motif; it reads AKI.

The protein belongs to the short-chain dehydrogenases/reductases (SDR) family. As to quaternary structure, monomer.

The protein resides in the peroxisome. The catalysed reaction is a (3R)-3-hydroxyacyl-CoA = a (2E)-enoyl-CoA + H2O. It catalyses the reaction a (3R)-3-hydroxyacyl-CoA + NAD(+) = a 3-oxoacyl-CoA + NADH + H(+). It functions in the pathway lipid metabolism; fatty acid beta-oxidation. Second trifunctional enzyme acting on the beta-oxidation pathway for fatty acids, possessing hydratase-dehydrogenase-epimerase activities. Converts trans-2-enoyl-CoA via D-3-hydroxyacyl-CoA to 3-ketoacyl-CoA. This chain is Peroxisomal hydratase-dehydrogenase-epimerase, found in Candida tropicalis (Yeast).